Here is a 102-residue protein sequence, read N- to C-terminus: Protein GOLVEN 4 (102 aa).

The signal sequence occupies residues 1–27 (MEMKKWSYANLITLALLFLFFIILLLA). Positions 28–89 (FQGGSRDDDH…QEREVYVELR (62 aa)) are excised as a propeptide. The interval 56-78 (KSLKPINPTKKNGFEYPDQGSHD) is disordered. A Sulfotyrosine modification is found at Tyr91. Pro99 carries the hydroxyproline modification.

It belongs to the RGF family. As to quaternary structure, binds to LRR receptor-like serine/threonine-protein kinases to trigger their dimerization with SERK proteins and subsequent signaling. As to expression, expressed in roots and sepals.

The protein resides in the secreted. In terms of biological role, signaling peptide (root growth factor) that promotes root hairs formation and growth. Maintains the postembryonic root stem cell niche. Regulates the pattern of root growth and lateral root development by modulating the length and the number of cortical cells in the root apical meristem (RAM), and the anticlinal asymmetric cell divisions in lateral root initiation cells. The sequence is that of Protein GOLVEN 4 from Arabidopsis thaliana (Mouse-ear cress).